The following is a 357-amino-acid chain: Phosphoribosylformylglycinamidine cyclo-ligase (357 aa).

It belongs to the AIR synthase family.

Its subcellular location is the cytoplasm. The enzyme catalyses 2-formamido-N(1)-(5-O-phospho-beta-D-ribosyl)acetamidine + ATP = 5-amino-1-(5-phospho-beta-D-ribosyl)imidazole + ADP + phosphate + H(+). Its pathway is purine metabolism; IMP biosynthesis via de novo pathway; 5-amino-1-(5-phospho-D-ribosyl)imidazole from N(2)-formyl-N(1)-(5-phospho-D-ribosyl)glycinamide: step 2/2. This chain is Phosphoribosylformylglycinamidine cyclo-ligase, found in Agrobacterium fabrum (strain C58 / ATCC 33970) (Agrobacterium tumefaciens (strain C58)).